The primary structure comprises 60 residues: Large ribosomal subunit protein uL30 (60 aa).

This sequence belongs to the universal ribosomal protein uL30 family. Part of the 50S ribosomal subunit.

In Aromatoleum aromaticum (strain DSM 19018 / LMG 30748 / EbN1) (Azoarcus sp. (strain EbN1)), this protein is Large ribosomal subunit protein uL30.